A 148-amino-acid chain; its full sequence is D-aminoacyl-tRNA deacylase (148 aa).

Residues 137-138 (GP) carry the Gly-cisPro motif, important for rejection of L-amino acids motif.

The protein belongs to the DTD family. In terms of assembly, homodimer.

Its subcellular location is the cytoplasm. It carries out the reaction glycyl-tRNA(Ala) + H2O = tRNA(Ala) + glycine + H(+). The enzyme catalyses a D-aminoacyl-tRNA + H2O = a tRNA + a D-alpha-amino acid + H(+). Functionally, an aminoacyl-tRNA editing enzyme that deacylates mischarged D-aminoacyl-tRNAs. Also deacylates mischarged glycyl-tRNA(Ala), protecting cells against glycine mischarging by AlaRS. Acts via tRNA-based rather than protein-based catalysis; rejects L-amino acids rather than detecting D-amino acids in the active site. By recycling D-aminoacyl-tRNA to D-amino acids and free tRNA molecules, this enzyme counteracts the toxicity associated with the formation of D-aminoacyl-tRNA entities in vivo and helps enforce protein L-homochirality. This chain is D-aminoacyl-tRNA deacylase, found in Lacticaseibacillus casei (strain BL23) (Lactobacillus casei).